We begin with the raw amino-acid sequence, 293 residues long: Acetylglutamate kinase (293 aa).

Substrate is bound by residues 68–69 (GG), Arg-90, and Asn-189.

This sequence belongs to the acetylglutamate kinase family. ArgB subfamily.

It is found in the cytoplasm. It carries out the reaction N-acetyl-L-glutamate + ATP = N-acetyl-L-glutamyl 5-phosphate + ADP. It participates in amino-acid biosynthesis; L-arginine biosynthesis; N(2)-acetyl-L-ornithine from L-glutamate: step 2/4. In terms of biological role, catalyzes the ATP-dependent phosphorylation of N-acetyl-L-glutamate. This chain is Acetylglutamate kinase, found in Caldicellulosiruptor bescii (strain ATCC BAA-1888 / DSM 6725 / KCTC 15123 / Z-1320) (Anaerocellum thermophilum).